A 179-amino-acid chain; its full sequence is Large ribosomal subunit protein uL6 (179 aa).

It belongs to the universal ribosomal protein uL6 family. In terms of assembly, part of the 50S ribosomal subunit.

This protein binds to the 23S rRNA, and is important in its secondary structure. It is located near the subunit interface in the base of the L7/L12 stalk, and near the tRNA binding site of the peptidyltransferase center. This chain is Large ribosomal subunit protein uL6, found in Syntrophus aciditrophicus (strain SB).